The following is a 207-amino-acid chain: High frequency lysogenization protein HflD homolog (207 aa).

It belongs to the HflD family.

It is found in the cytoplasm. The protein resides in the cell inner membrane. This Cellvibrio japonicus (strain Ueda107) (Pseudomonas fluorescens subsp. cellulosa) protein is High frequency lysogenization protein HflD homolog.